A 258-amino-acid chain; its full sequence is Phosphoadenosine 5'-phosphosulfate reductase (258 aa).

The Nucleophile; cysteine thiosulfonate intermediate role is filled by C244.

Belongs to the PAPS reductase family. CysH subfamily.

It is found in the cytoplasm. It catalyses the reaction [thioredoxin]-disulfide + sulfite + adenosine 3',5'-bisphosphate + 2 H(+) = [thioredoxin]-dithiol + 3'-phosphoadenylyl sulfate. It participates in sulfur metabolism; hydrogen sulfide biosynthesis; sulfite from sulfate: step 3/3. In terms of biological role, catalyzes the formation of sulfite from phosphoadenosine 5'-phosphosulfate (PAPS) using thioredoxin as an electron donor. The chain is Phosphoadenosine 5'-phosphosulfate reductase from Vibrio vulnificus (strain YJ016).